The chain runs to 335 residues: F420-dependent glucose-6-phosphate dehydrogenase (335 aa).

Coenzyme F420-(gamma-Glu)n is bound at residue Asp-40. The Proton donor role is filled by His-41. Residues Thr-77 and Thr-108–Gly-109 contribute to the coenzyme F420-(gamma-Glu)n site. Glu-110 serves as the catalytic Proton acceptor. Residues Asn-113, Gly-177–Gly-178, and Val-180–Val-181 contribute to the coenzyme F420-(gamma-Glu)n site. Substrate is bound by residues Thr-195, Lys-198, Lys-259, and Arg-283.

Belongs to the F420-dependent glucose-6-phosphate dehydrogenase family. As to quaternary structure, homodimer.

It catalyses the reaction oxidized coenzyme F420-(gamma-L-Glu)(n) + D-glucose 6-phosphate + H(+) = 6-phospho-D-glucono-1,5-lactone + reduced coenzyme F420-(gamma-L-Glu)(n). In terms of biological role, catalyzes the coenzyme F420-dependent oxidation of glucose 6-phosphate (G6P) to 6-phosphogluconolactone. The chain is F420-dependent glucose-6-phosphate dehydrogenase from Segniliparus rotundus (strain ATCC BAA-972 / CDC 1076 / CIP 108378 / DSM 44985 / JCM 13578).